The primary structure comprises 231 residues: uncharacterized protein (231 aa).

The helical transmembrane segment at 10-30 (SQNIFFIAIVIFILSSVILYH) threads the bilayer.

The protein localises to the membrane. This is an uncharacterized protein from Rickettsia prowazekii (strain Madrid E).